Here is a 187-residue protein sequence, read N- to C-terminus: Elongation factor P (187 aa).

The protein belongs to the elongation factor P family.

The protein localises to the cytoplasm. Its pathway is protein biosynthesis; polypeptide chain elongation. Its function is as follows. Involved in peptide bond synthesis. Stimulates efficient translation and peptide-bond synthesis on native or reconstituted 70S ribosomes in vitro. Probably functions indirectly by altering the affinity of the ribosome for aminoacyl-tRNA, thus increasing their reactivity as acceptors for peptidyl transferase. This chain is Elongation factor P, found in Leifsonia xyli subsp. xyli (strain CTCB07).